Consider the following 279-residue polypeptide: Shikimate dehydrogenase (NADP(+)) (279 aa).

Shikimate contacts are provided by residues 14–16 and threonine 63; that span reads SIS. Lysine 67 (proton acceptor) is an active-site residue. Glutamate 79 is an NADP(+) binding site. Shikimate contacts are provided by asparagine 88 and aspartate 103. NADP(+) contacts are provided by residues 127-131, 151-156, and methionine 219; these read GAGGA and NRTYEK. Shikimate is bound at residue tyrosine 221. An NADP(+)-binding site is contributed by glycine 242.

It belongs to the shikimate dehydrogenase family. As to quaternary structure, homodimer.

The enzyme catalyses shikimate + NADP(+) = 3-dehydroshikimate + NADPH + H(+). It functions in the pathway metabolic intermediate biosynthesis; chorismate biosynthesis; chorismate from D-erythrose 4-phosphate and phosphoenolpyruvate: step 4/7. Involved in the biosynthesis of the chorismate, which leads to the biosynthesis of aromatic amino acids. Catalyzes the reversible NADPH linked reduction of 3-dehydroshikimate (DHSA) to yield shikimate (SA). In Caldicellulosiruptor saccharolyticus (strain ATCC 43494 / DSM 8903 / Tp8T 6331), this protein is Shikimate dehydrogenase (NADP(+)).